A 63-amino-acid chain; its full sequence is Large ribosomal subunit protein uL29 (63 aa).

This sequence belongs to the universal ribosomal protein uL29 family.

In Shewanella loihica (strain ATCC BAA-1088 / PV-4), this protein is Large ribosomal subunit protein uL29.